A 238-amino-acid chain; its full sequence is Protein CPn_0658/CP_0089/CPj0658/CpB0684 (238 aa).

The protein belongs to the chlamydial CPn_0658/CT_538/TC_0825 family.

In Chlamydia pneumoniae (Chlamydophila pneumoniae), this protein is Protein CPn_0658/CP_0089/CPj0658/CpB0684.